The sequence spans 352 residues: Replication factor C subunit 5 (352 aa).

It belongs to the activator 1 small subunits family. Heteropentamer of subunits rfc1, rfc2, rfc3, rfc4 and rfc5 that forms a complex with PCNA in the presence of ATP.

It is found in the nucleus. Its function is as follows. The elongation of primed DNA templates by DNA polymerase delta and epsilon requires the action of the accessory proteins proliferating cell nuclear antigen (PCNA) and activator 1. In Neurospora crassa (strain ATCC 24698 / 74-OR23-1A / CBS 708.71 / DSM 1257 / FGSC 987), this protein is Replication factor C subunit 5.